The sequence spans 228 residues: GrpE protein homolog, mitochondrial (228 aa).

The segment covering 46-57 (DEAKSEESKENN) has biased composition (basic and acidic residues). The tract at residues 46–66 (DEAKSEESKENNEDLTEEQSE) is disordered.

This sequence belongs to the GrpE family. As to quaternary structure, component of the PAM complex, at least composed of SSC1 (mtHsp70), MGE1, TIM44, PAM16/TIM16, PAM17 and PAM18/TIM14. Interacts with SSQ1. Post-translationally, the N-terminus is blocked.

The protein resides in the mitochondrion matrix. In terms of biological role, essential component of the PAM complex, a complex required for the translocation of transit peptide-containing proteins from the inner membrane into the mitochondrial matrix in an ATP-dependent manner. Seems to control the nucleotide-dependent binding of SSC1 to substrate proteins and the association of SSC1 with TIM44. The protein is GrpE protein homolog, mitochondrial (MGE1) of Saccharomyces cerevisiae (strain ATCC 204508 / S288c) (Baker's yeast).